A 437-amino-acid chain; its full sequence is Trigger factor (437 aa).

Residues Gly-164 to Pro-249 enclose the PPIase FKBP-type domain.

This sequence belongs to the FKBP-type PPIase family. Tig subfamily.

It localises to the cytoplasm. It catalyses the reaction [protein]-peptidylproline (omega=180) = [protein]-peptidylproline (omega=0). Involved in protein export. Acts as a chaperone by maintaining the newly synthesized protein in an open conformation. Functions as a peptidyl-prolyl cis-trans isomerase. This Azoarcus sp. (strain BH72) protein is Trigger factor.